The following is a 456-amino-acid chain: 3-isopropylmalate dehydratase large subunit (456 aa).

The [4Fe-4S] cluster site is built by Cys-336, Cys-396, and Cys-399.

It belongs to the aconitase/IPM isomerase family. LeuC type 1 subfamily. In terms of assembly, heterodimer of LeuC and LeuD. It depends on [4Fe-4S] cluster as a cofactor.

The enzyme catalyses (2R,3S)-3-isopropylmalate = (2S)-2-isopropylmalate. It participates in amino-acid biosynthesis; L-leucine biosynthesis; L-leucine from 3-methyl-2-oxobutanoate: step 2/4. Catalyzes the isomerization between 2-isopropylmalate and 3-isopropylmalate, via the formation of 2-isopropylmaleate. This is 3-isopropylmalate dehydratase large subunit from Staphylococcus epidermidis (strain ATCC 12228 / FDA PCI 1200).